The following is a 240-amino-acid chain: UDP-2,3-diacylglucosamine hydrolase (240 aa).

Residues Asp-8, His-10, Asp-41, Asn-79, and His-114 each coordinate Mn(2+). 79-80 (NR) contacts substrate. Substrate is bound by residues Asp-122, Ser-160, Asn-164, Lys-167, and His-195. Mn(2+) contacts are provided by His-195 and His-197.

This sequence belongs to the LpxH family. Mn(2+) serves as cofactor.

It localises to the cell inner membrane. The enzyme catalyses UDP-2-N,3-O-bis[(3R)-3-hydroxytetradecanoyl]-alpha-D-glucosamine + H2O = 2-N,3-O-bis[(3R)-3-hydroxytetradecanoyl]-alpha-D-glucosaminyl 1-phosphate + UMP + 2 H(+). Its pathway is glycolipid biosynthesis; lipid IV(A) biosynthesis; lipid IV(A) from (3R)-3-hydroxytetradecanoyl-[acyl-carrier-protein] and UDP-N-acetyl-alpha-D-glucosamine: step 4/6. Its function is as follows. Hydrolyzes the pyrophosphate bond of UDP-2,3-diacylglucosamine to yield 2,3-diacylglucosamine 1-phosphate (lipid X) and UMP by catalyzing the attack of water at the alpha-P atom. Involved in the biosynthesis of lipid A, a phosphorylated glycolipid that anchors the lipopolysaccharide to the outer membrane of the cell. This is UDP-2,3-diacylglucosamine hydrolase from Escherichia coli O157:H7.